The sequence spans 574 residues: Interleukin-22 receptor subunit alpha-1 (574 aa).

An N-terminal signal peptide occupies residues 1–15; that stretch reads MRTLLTILTVGSLAA. The Extracellular portion of the chain corresponds to 16-228; sequence HAPEDPSDLL…VKTLPDRTWT (213 aa). 2 consecutive Fibronectin type-III domains span residues 17–124 and 141–221; these read APED…LKPP and PTPT…RVKT. Residues C71 and C79 are joined by a disulfide bond. N-linked (GlcNAc...) asparagine glycans are attached at residues N80 and N172. An intrachain disulfide couples C128 to C217. The chain crosses the membrane as a helical span at residues 229–249; it reads YSFSGAFLFSMGFLVAVLCYL. The Cytoplasmic portion of the chain corresponds to 250–574; sequence SYRYVTKPPA…GLALTVQWES (325 aa). Disordered regions lie at residues 388–440, 454–489, and 507–560; these read SSYA…AGSC, AMEE…EGTP, and HPMS…TELD. 2 positions are modified to phosphoserine: S410 and S414.

Belongs to the type II cytokine receptor family. As to quaternary structure, heterodimer with IL10RB and with IL20RB. IL22 binding to heterodimer is greater than binding to IL22RA1 alone. Interacts with FBXW12; the interaction promotes ubiquitination of IL22RA1. Ubiquitinated. Expressed in colon, liver, lung, pancreas and kidney. No expression in immune cells such as monocytes, T-cells, and NK-cells. Expressed in keratinocytes of normal skin as well as in psoriatic skin lesion. Detected in normal blood brain barrier endothelial cells as well as in multiple sclerosis lesions; Strongly expressed on central nervous system vessels within infiltrated multiple sclerosis lesions. Overexpressed in synovial fluid cells from rheumatoid arthritis and spondyloarthropathy patients.

The protein localises to the cell membrane. In terms of biological role, component of the receptor for IL20, IL22 and IL24. Component of IL22 receptor formed by IL22RA1 and IL10RB enabling IL22 signaling via JAK/STAT pathways. IL22 also induces activation of MAPK1/MAPK3 and Akt kinases pathways. Component of one of the receptor for IL20 and IL24 formed by IL22RA1 and IL20RB also signaling through STATs activation. Mediates IL24 antiangiogenic activity as well as IL24 inhibitory effect on endothelial cell tube formation and differentiation. This is Interleukin-22 receptor subunit alpha-1 (IL22RA1) from Homo sapiens (Human).